The following is a 257-amino-acid chain: Insulin-induced gene 1 protein (257 aa).

Over 1–64 (MPRLHDHVWS…ARPGSWHHDL (64 aa)) the chain is Cytoplasmic. The tract at residues 32–54 (CPQGSGAPEPAPRSPRAGTAGCG) is disordered. The helical transmembrane segment at 65–87 (VQRSLVLFSFGVVLALVLNLLQI) threads the bilayer. Residues 88-106 (QRNVTLFPDEVIATIFSSA) are Extracellular-facing. A helical transmembrane segment spans residues 107–124 (WWVPPCCGTAAAVVGLLY). The Cytoplasmic portion of the chain corresponds to 125-139 (PCIDSHLGEPHKFKR). Residues K136 and K138 each participate in a glycyl lysine isopeptide (Lys-Gly) (interchain with G-Cter in ubiquitin) cross-link. A helical transmembrane segment spans residues 140–162 (EWASVMRCIAVFVGINHASAKLD). At 163-165 (FAN) the chain is on the extracellular side. A helical transmembrane segment spans residues 166 to 184 (NVQLSLTLAALSLGLWWTF). Residues 185–189 (DRSRS) lie on the Cytoplasmic side of the membrane. S187 bears the Phosphoserine mark. The chain crosses the membrane as a helical span at residues 190–211 (GLGLGITIAFLATLITQFLVYN). Over 212-225 (GVYQYTSPDFLYIR) the chain is Extracellular. A helical transmembrane segment spans residues 226 to 243 (SWLPCIFFSGGVTVGNIG). Residues 244–257 (RQLAMGVPEKPHSD) lie on the Cytoplasmic side of the membrane. Positions 251–257 (PEKPHSD) match the KxHxx motif.

It belongs to the INSIG family. Interacts with SCAP; interaction is direct and only takes place in the presence of sterols; it prevents interaction between SCAP and the coat protein complex II (COPII). Associates with the SCAP-SREBP complex (composed of SCAP and SREBF1/SREBP1 or SREBF2/SREBP2); association is mediated via its interaction with SCAP and only takes place in the presence of sterols. Interaction with SCAP is mutually exclusive with PAQR3. Interacts with HMGCR (via its SSD); the interaction, accelerated by sterols, leads to the recruitment of HMGCR to AMFR/gp78 for its ubiquitination by the sterol-mediated ERAD pathway. Interacts with AMFR/gp78 (via its membrane domain); the interaction recruits HMCR at the ER membrane for its ubiquitination and degradation by the sterol-mediated ERAD pathway. Interacts with SOAT2/ACAT2; leading to promote recruitment of AMFR/gp78 and subsequent ubiquitination of SOAT2/ACAT2. Interacts with RNF139. Interacts with RNF145. In terms of processing, phosphorylation at Ser-187 by PCK1 reduces binding to oxysterol, disrupting the interaction between INSIG1 and SCAP, thereby promoting nuclear translocation of SREBP proteins (SREBF1/SREBP1 or SREBF2/SREBP2) and subsequent transcription of downstream lipogenesis-related genes. Ubiquitinated by AMFR/gp78 in response to sterol deprivation, leading to its degradation: when the SCAP-SREBP complex becomes dissociated from INSIG1, INSIG1 is then ubiquitinated and degraded in proteasomes. Although ubiquitination is required for rapid INSIG1 degradation, it is not required for release of the SCAP-SREBP complex. Ubiquitinated by RNF139.

It is found in the endoplasmic reticulum membrane. In terms of biological role, oxysterol-binding protein that mediates feedback control of cholesterol synthesis by controlling both endoplasmic reticulum to Golgi transport of SCAP and degradation of HMGCR. Acts as a negative regulator of cholesterol biosynthesis by mediating the retention of the SCAP-SREBP complex in the endoplasmic reticulum, thereby blocking the processing of sterol regulatory element-binding proteins (SREBPs) SREBF1/SREBP1 and SREBF2/SREBP2. Binds oxysterol, including 25-hydroxycholesterol, regulating interaction with SCAP and retention of the SCAP-SREBP complex in the endoplasmic reticulum. In presence of oxysterol, interacts with SCAP, retaining the SCAP-SREBP complex in the endoplasmic reticulum, thereby preventing SCAP from escorting SREBF1/SREBP1 and SREBF2/SREBP2 to the Golgi. Sterol deprivation or phosphorylation by PCK1 reduce oxysterol-binding, disrupting the interaction between INSIG1 and SCAP, thereby promoting Golgi transport of the SCAP-SREBP complex, followed by processing and nuclear translocation of SREBF1/SREBP1 and SREBF2/SREBP2. Also regulates cholesterol synthesis by regulating degradation of HMGCR: initiates the sterol-mediated ubiquitin-mediated endoplasmic reticulum-associated degradation (ERAD) of HMGCR via recruitment of the reductase to the ubiquitin ligases AMFR/gp78 and/or RNF139. Also regulates degradation of SOAT2/ACAT2 when the lipid levels are low: initiates the ubiquitin-mediated degradation of SOAT2/ACAT2 via recruitment of the ubiquitin ligases AMFR/gp78. This Cricetulus griseus (Chinese hamster) protein is Insulin-induced gene 1 protein.